The following is a 231-amino-acid chain: Adenosylcobinamide-GDP ribazoletransferase (231 aa).

5 helical membrane-spanning segments follow: residues 28–48 (LWLFPYAAILIALIVSVPHFI), 97–117 (TGAGGVAVVVVYFLLLYTLLY), 121–141 (FWEIALSQVLAKYSMLLLMLL), 162–182 (VFIGAVPVVLLCYKVGIESLA), and 209–229 (VIGSANCLTFAASLSALTIAG).

The protein belongs to the CobS family. The cofactor is Mg(2+).

The protein resides in the cell membrane. It carries out the reaction alpha-ribazole + adenosylcob(III)inamide-GDP = adenosylcob(III)alamin + GMP + H(+). It catalyses the reaction alpha-ribazole 5'-phosphate + adenosylcob(III)inamide-GDP = adenosylcob(III)alamin 5'-phosphate + GMP + H(+). It participates in cofactor biosynthesis; adenosylcobalamin biosynthesis; adenosylcobalamin from cob(II)yrinate a,c-diamide: step 7/7. In terms of biological role, joins adenosylcobinamide-GDP and alpha-ribazole to generate adenosylcobalamin (Ado-cobalamin). Also synthesizes adenosylcobalamin 5'-phosphate from adenosylcobinamide-GDP and alpha-ribazole 5'-phosphate. This is Adenosylcobinamide-GDP ribazoletransferase (cobS2) from Archaeoglobus fulgidus (strain ATCC 49558 / DSM 4304 / JCM 9628 / NBRC 100126 / VC-16).